The primary structure comprises 239 residues: Suppressor of organelle fusion 1 (239 aa).

It belongs to the WD repeat WDR91 family. As to quaternary structure, interacts with sorf-2; the interaction is direct. Interacts with bec-1.

Its subcellular location is the early endosome. It localises to the late endosome. The protein localises to the cytoplasm. In terms of biological role, together with sorf-2 negatively regulates the levels of phosphatidylinositol 3-phosphate (PtdIns3P) to enable the conversion of early endosomes to late endosomes. Binds to sorf-2 and the sorf-1-sorf-2 complex likely acts through bec-1, a non-catalytic subunit of phosphatidylinositol 3-kinase (PI3K), to suppress PI3K activity, thereby negatively regulating endosomal PtdIns3P levels. In Caenorhabditis elegans, this protein is Suppressor of organelle fusion 1.